The sequence spans 164 residues: SsrA-binding protein (164 aa).

It belongs to the SmpB family.

Its subcellular location is the cytoplasm. Its function is as follows. Required for rescue of stalled ribosomes mediated by trans-translation. Binds to transfer-messenger RNA (tmRNA), required for stable association of tmRNA with ribosomes. tmRNA and SmpB together mimic tRNA shape, replacing the anticodon stem-loop with SmpB. tmRNA is encoded by the ssrA gene; the 2 termini fold to resemble tRNA(Ala) and it encodes a 'tag peptide', a short internal open reading frame. During trans-translation Ala-aminoacylated tmRNA acts like a tRNA, entering the A-site of stalled ribosomes, displacing the stalled mRNA. The ribosome then switches to translate the ORF on the tmRNA; the nascent peptide is terminated with the 'tag peptide' encoded by the tmRNA and targeted for degradation. The ribosome is freed to recommence translation, which seems to be the essential function of trans-translation. The polypeptide is SsrA-binding protein (Synechococcus sp. (strain CC9311)).